Consider the following 146-residue polypeptide: HTH-type transcriptional regulator FarR (146 aa).

The region spanning 7-139 is the HTH marR-type domain; the sequence is HASINIGLIQ…LKDLLAELAK (133 aa). The segment at residues 53–76 is a DNA-binding region (H-T-H motif); that stretch reads FQDLANQACILRPSLTGILTRLEK.

Its activity is regulated as follows. Repressor activity requires the presence of the Integration Host Factor (IHF), which binds to sequences located between FarR binding sites A and C. IHF binding to the promoter region stabilizes the binding of FarR to its binding sites A and C and as a consequence, enhances repression of the farAB operon. Its function is as follows. Negatively controls expression of the farAB operon by binding directly to the farAB promoter region. Binds to three sites (sites A, B and C) within the DNA sequence upstream of farA. Also represses its own expression. This Neisseria gonorrhoeae protein is HTH-type transcriptional regulator FarR.